Consider the following 122-residue polypeptide: Large ribosomal subunit protein uL14 (122 aa).

Belongs to the universal ribosomal protein uL14 family. As to quaternary structure, part of the 50S ribosomal subunit. Forms a cluster with proteins L3 and L19. In the 70S ribosome, L14 and L19 interact and together make contacts with the 16S rRNA in bridges B5 and B8.

In terms of biological role, binds to 23S rRNA. Forms part of two intersubunit bridges in the 70S ribosome. The protein is Large ribosomal subunit protein uL14 of Neisseria gonorrhoeae (strain ATCC 700825 / FA 1090).